The sequence spans 142 residues: Hemoglobin subunit alpha-1 (142 aa).

The Globin domain occupies 2–142 (LLSADDKKHI…VSTVLTSKYR (141 aa)). Position 59 (histidine 59) interacts with O2. Histidine 88 contacts heme b.

This sequence belongs to the globin family. In terms of assembly, heterotetramer of two alpha chains and two beta chains. As to expression, red blood cells.

In terms of biological role, involved in oxygen transport from the lung to the various peripheral tissues. This is Hemoglobin subunit alpha-1 (hba1) from Xenopus laevis (African clawed frog).